A 165-amino-acid chain; its full sequence is UPF0254 protein MmarC7_0182 (165 aa).

This sequence belongs to the UPF0254 family.

The chain is UPF0254 protein MmarC7_0182 from Methanococcus maripaludis (strain C7 / ATCC BAA-1331).